A 104-amino-acid chain; its full sequence is Protein ArtA (104 aa).

This Escherichia coli (strain K12) protein is Protein ArtA (artA).